The following is a 237-amino-acid chain: UPF0502 protein HEAR1280 (237 aa).

Residues 1–13 are compositionally biased toward polar residues; it reads MNTEVMHSTSTES. The tract at residues 1 to 21 is disordered; that stretch reads MNTEVMHSTSTESDAQEKPQA.

This sequence belongs to the UPF0502 family.

The protein is UPF0502 protein HEAR1280 of Herminiimonas arsenicoxydans.